Here is a 260-residue protein sequence, read N- to C-terminus: MADWNPALYTRFEDERTRPAAELLARVPLEAPRLAIDLGCGPGNSTALIAARFPDAEVIGLDTSPAMLESARARLPRLAFALADAATWTPERAPDLIYANAVLQWLPDHATLLPRLFGLLAPGGVLAVQMPDNLAEPTHRLMRAVAASGPWAAAIGDPAVAGRLGRMLEPAAYYDLLAPAAAEVDVWRTAYHHRMADAAAIVDWVRATGLRPFLDPLDPEHRAGFLDAYTRAIDGAYPPRSDGRRLLAFPRVFVVARKAS.

It belongs to the methyltransferase superfamily. Tam family.

Its subcellular location is the cytoplasm. The catalysed reaction is trans-aconitate + S-adenosyl-L-methionine = (E)-3-(methoxycarbonyl)pent-2-enedioate + S-adenosyl-L-homocysteine. Catalyzes the S-adenosylmethionine monomethyl esterification of trans-aconitate. In Methylobacterium radiotolerans (strain ATCC 27329 / DSM 1819 / JCM 2831 / NBRC 15690 / NCIMB 10815 / 0-1), this protein is Trans-aconitate 2-methyltransferase.